The chain runs to 360 residues: Alpha-ketoglutarate dependent kainoid synthase (360 aa).

Residues 200–310 (MFFSNRIYPE…RASLISFYEP (111 aa)) form the Fe2OG dioxygenase domain. Residues H225, D227, and H286 each coordinate Fe cation. R301 is a 2-oxoglutarate binding site.

This sequence belongs to the iron/ascorbate-dependent oxidoreductase family. Fe(2+) serves as cofactor.

The enzyme catalyses prekainate + 2-oxoglutarate + O2 = kainate + succinate + CO2 + H2O. It carries out the reaction prekainate + 2-oxoglutarate + O2 + H(+) = kainate lactone + succinate + CO2 + H2O. It participates in secondary metabolite biosynthesis. Its activity is regulated as follows. Inhibited by the iron chelator EDTA. Iron/ascorbate-dependent oxidoreductase: part of the gene cluster that mediates the biosynthesis of kainic acid (KA) and derivatives, natural products with neurochemical activity acting as ionotropic glutamate receptor (iGluR) agonists, thus being neurotoxins. Catalyzes the conversion of prekainic acid to kainic acid and kainic acid lactone. The chain is Alpha-ketoglutarate dependent kainoid synthase from Digenea simplex (Marine red alga).